The primary structure comprises 199 residues: Peptidyl-tRNA hydrolase (199 aa).

Residue Tyr-15 participates in tRNA binding. His-20 (proton acceptor) is an active-site residue. Residues Tyr-66, Asn-68, and Asn-114 each coordinate tRNA.

The protein belongs to the PTH family. In terms of assembly, monomer.

It localises to the cytoplasm. The catalysed reaction is an N-acyl-L-alpha-aminoacyl-tRNA + H2O = an N-acyl-L-amino acid + a tRNA + H(+). Its function is as follows. Hydrolyzes ribosome-free peptidyl-tRNAs (with 1 or more amino acids incorporated), which drop off the ribosome during protein synthesis, or as a result of ribosome stalling. In terms of biological role, catalyzes the release of premature peptidyl moieties from peptidyl-tRNA molecules trapped in stalled 50S ribosomal subunits, and thus maintains levels of free tRNAs and 50S ribosomes. This Burkholderia multivorans (strain ATCC 17616 / 249) protein is Peptidyl-tRNA hydrolase.